A 246-amino-acid polypeptide reads, in one-letter code: tRNA (guanine-N(7)-)-methyltransferase (246 aa).

S-adenosyl-L-methionine-binding residues include glutamate 76, glutamate 101, aspartate 128, and aspartate 151. The active site involves aspartate 151. Lysine 155 is a substrate binding site. Positions 157–162 are interaction with RNA; sequence RHNKRR. Residues aspartate 187 and 222 to 225 contribute to the substrate site; that span reads TKFE.

Belongs to the class I-like SAM-binding methyltransferase superfamily. TrmB family.

The catalysed reaction is guanosine(46) in tRNA + S-adenosyl-L-methionine = N(7)-methylguanosine(46) in tRNA + S-adenosyl-L-homocysteine. It participates in tRNA modification; N(7)-methylguanine-tRNA biosynthesis. Its function is as follows. Catalyzes the formation of N(7)-methylguanine at position 46 (m7G46) in tRNA. This Dechloromonas aromatica (strain RCB) protein is tRNA (guanine-N(7)-)-methyltransferase.